Here is a 249-residue protein sequence, read N- to C-terminus: Segregation and condensation protein A (249 aa).

It belongs to the ScpA family. Component of a cohesin-like complex composed of ScpA, ScpB and the Smc homodimer, in which ScpA and ScpB bind to the head domain of Smc. The presence of the three proteins is required for the association of the complex with DNA.

Its subcellular location is the cytoplasm. Functionally, participates in chromosomal partition during cell division. May act via the formation of a condensin-like complex containing Smc and ScpB that pull DNA away from mid-cell into both cell halves. The protein is Segregation and condensation protein A of Mycoplasmopsis pulmonis (strain UAB CTIP) (Mycoplasma pulmonis).